The sequence spans 642 residues: Fimbrin (642 aa).

2 EF-hand domains span residues 16-50 (EDLFSTIEKFRAIDLDDKGWVEKQQALEAVSKDGD) and 51-86 (ATYDEARETLKHVGVDASGRVELDDYVGLVAKLRES). 7 residues coordinate Ca(2+): Asp-29, Asp-31, Trp-35, Asp-66, Ser-68, Arg-70, and Asp-75. Actin-binding regions lie at residues 125 to 394 (IVAG…GLEP) and 395 to 642 (IQEE…TLNK). 4 consecutive Calponin-homology (CH) domains span residues 139–259 (EEER…RRGL), 287–390 (LPPE…NTHP), 411–521 (EREA…RRNI), and 534–642 (DMSD…TLNK).

Binds to actin, and functionally associates with actin structures involved in the development and maintenance of cell polarity. The sequence is that of Fimbrin (SAC6) from Saccharomyces cerevisiae (strain ATCC 204508 / S288c) (Baker's yeast).